Here is a 418-residue protein sequence, read N- to C-terminus: Serine hydroxymethyltransferase (418 aa).

(6S)-5,6,7,8-tetrahydrofolate-binding positions include Leu-121 and 125-127 (GHL). At Lys-230 the chain carries N6-(pyridoxal phosphate)lysine. Residues Glu-246 and 355–357 (SPF) each bind (6S)-5,6,7,8-tetrahydrofolate.

This sequence belongs to the SHMT family. In terms of assembly, homodimer. Requires pyridoxal 5'-phosphate as cofactor.

The protein localises to the cytoplasm. The catalysed reaction is (6R)-5,10-methylene-5,6,7,8-tetrahydrofolate + glycine + H2O = (6S)-5,6,7,8-tetrahydrofolate + L-serine. It participates in one-carbon metabolism; tetrahydrofolate interconversion. It functions in the pathway amino-acid biosynthesis; glycine biosynthesis; glycine from L-serine: step 1/1. Its function is as follows. Catalyzes the reversible interconversion of serine and glycine with tetrahydrofolate (THF) serving as the one-carbon carrier. This reaction serves as the major source of one-carbon groups required for the biosynthesis of purines, thymidylate, methionine, and other important biomolecules. Also exhibits THF-independent aldolase activity toward beta-hydroxyamino acids, producing glycine and aldehydes, via a retro-aldol mechanism. This Streptococcus pneumoniae (strain ATCC 700669 / Spain 23F-1) protein is Serine hydroxymethyltransferase.